The primary structure comprises 307 residues: Small ribosomal subunit biogenesis GTPase RsgA (307 aa).

Residues 1–21 (MPSEHPFSDGISTPNPKETMN) form a disordered region. Over residues 10 to 21 (GISTPNPKETMN) the composition is skewed to polar residues. Residues 85–242 (RQDAWKTKLI…LIDSPGLQEF (158 aa)) enclose the CP-type G domain. GTP-binding positions include 135 to 138 (NKAD) and 184 to 192 (GQSGMGKST). Residues C266, C271, H273, and C279 each contribute to the Zn(2+) site.

The protein belongs to the TRAFAC class YlqF/YawG GTPase family. RsgA subfamily. As to quaternary structure, monomer. Associates with 30S ribosomal subunit, binds 16S rRNA. It depends on Zn(2+) as a cofactor.

It localises to the cytoplasm. One of several proteins that assist in the late maturation steps of the functional core of the 30S ribosomal subunit. Helps release RbfA from mature subunits. May play a role in the assembly of ribosomal proteins into the subunit. Circularly permuted GTPase that catalyzes slow GTP hydrolysis, GTPase activity is stimulated by the 30S ribosomal subunit. The sequence is that of Small ribosomal subunit biogenesis GTPase RsgA from Neisseria gonorrhoeae (strain ATCC 700825 / FA 1090).